Consider the following 236-residue polypeptide: MTRKDFFNVLTRYFPWVDEQTFMSFEKYKTIIQKYNQIFNLTRLDSDDKIYQNFFLDSLAPYKELDFFTQNTNLKLIDIGSGSGIPGVVLKIIFKNLNLTLLEANQKRCEFLKILTQELGLNDVLIWNMRAEDLTQSMRESFDIATSRAVASLDKILEISAAFVKVNGYLIQPKSIKFYEEELKAKNIIKTLYLERIALKDFWENDYHHLVGVYLKKQITPLQFPRPWNLILKKPL.

Residues G80, 131-132 (AE), and R148 contribute to the S-adenosyl-L-methionine site.

This sequence belongs to the methyltransferase superfamily. RNA methyltransferase RsmG family.

The protein resides in the cytoplasm. Functionally, specifically methylates the N7 position of a guanine in 16S rRNA. In Ureaplasma parvum serovar 3 (strain ATCC 27815 / 27 / NCTC 11736), this protein is Ribosomal RNA small subunit methyltransferase G.